The following is a 148-amino-acid chain: 3-dehydroquinate dehydratase (148 aa).

Substrate contacts are provided by asparagine 74, histidine 80, and aspartate 87. The active-site Proton donor is histidine 100. Substrate is bound by residues 101–102 (LS) and arginine 111.

It belongs to the type-II 3-dehydroquinase family. In terms of assembly, homododecamer.

It carries out the reaction 3-dehydroquinate = 3-dehydroshikimate + H2O. It participates in metabolic intermediate biosynthesis; chorismate biosynthesis; chorismate from D-erythrose 4-phosphate and phosphoenolpyruvate: step 3/7. The protein is 3-dehydroquinate dehydratase (yqhS) of Bacillus subtilis (strain 168).